A 467-amino-acid chain; its full sequence is Sialic acid-binding Ig-like lectin 7 (467 aa).

The first 18 residues, 1–18 (MLLLLLLPLLWGRERVEG), serve as a signal peptide directing secretion. Over 19–353 (QKSNRKDYSL…KMRPVSGVLL (335 aa)) the chain is Extracellular. Positions 39–122 (GMCVHVRCSF…ARMSDAGRYF (84 aa)) constitute an Ig-like V-type domain. The cysteines at positions 46 and 106 are disulfide-linked. N105 carries N-linked (GlcNAc...) asparagine glycosylation. N-acetylneuraminate is bound by residues R124 and 131-135 (KWNYK). N-linked (GlcNAc...) asparagine glycans are attached at residues N142 and N165. The Ig-like C2-type 1 domain occupies 150-233 (PNILIPGTLE…AGVTTNRTIQ (84 aa)). A disulfide bridge connects residues C168 and C217. N229, N235, N242, and N260 each carry an N-linked (GlcNAc...) asparagine glycan. In terms of domain architecture, Ig-like C2-type 2 spans 240 to 336 (PQNLTVTVFQ…GSQHVSLNLS (97 aa)). An intrachain disulfide couples C276 to C320. N-linked (GlcNAc...) asparagine glycosylation is present at N334. The chain crosses the membrane as a helical span at residues 354–376 (GAVGGAGATALVFLSFCVIFIVV). The Cytoplasmic portion of the chain corresponds to 377-467 (RSCRKKSARP…NEYSEIKIPK (91 aa)). Over residues 401–412 (IRGSASQGNLTE) the composition is skewed to polar residues. Positions 401-431 (IRGSASQGNLTESWADDNPRHHGLAAHSSGE) are disordered. S429 is modified (phosphoserine). Positions 435-440 (IQYAPL) match the ITIM motif motif. Residues 443-467 (HKGEPQDLSGQEATNNEYSEIKIPK) form a disordered region. Over residues 450-460 (LSGQEATNNEY) the composition is skewed to polar residues.

The protein belongs to the immunoglobulin superfamily. SIGLEC (sialic acid binding Ig-like lectin) family. As to quaternary structure, interacts with PTPN6/SHP-1 upon phosphorylation. In terms of processing, tyrosine phosphorylated. Predominantly expressed by resting and activated natural killer cells and at lower levels by granulocytes and monocytes. High expression found in placenta, liver, lung, spleen, and peripheral blood leukocytes.

The protein localises to the membrane. Putative adhesion molecule that mediates sialic-acid dependent binding to cells. Preferentially binds to alpha-2,3- and alpha-2,6-linked sialic acid. Also binds disialogangliosides (disialogalactosyl globoside, disialyl lactotetraosylceramide and disialyl GalNAc lactotetraoslylceramide). The sialic acid recognition site may be masked by cis interactions with sialic acids on the same cell surface. In the immune response, may act as an inhibitory receptor upon ligand induced tyrosine phosphorylation by recruiting cytoplasmic phosphatase(s) via their SH2 domain(s) that block signal transduction through dephosphorylation of signaling molecules. Mediates inhibition of natural killer cells cytotoxicity. May play a role in hemopoiesis. Inhibits differentiation of CD34+ cell precursors towards myelomonocytic cell lineage and proliferation of leukemic myeloid cells (in vitro). The polypeptide is Sialic acid-binding Ig-like lectin 7 (SIGLEC7) (Homo sapiens (Human)).